The chain runs to 465 residues: Mothers against decapentaplegic homolog 1 (465 aa).

The region spanning 12–136 (PAVKRLLGWK…YKRVESPVLP (125 aa)) is the MH1 domain. The Zn(2+) site is built by C64, C109, C121, and H126. The disordered stretch occupies residues 161–240 (QNEPHMPHNA…EDQMTHDTSQ (80 aa)). The span at 179-210 (PNSHPFPHSPNSSYPNSPGSSSSTYPHSPASS) shows a compositional bias: low complexity. An MH2 domain is found at 271–465 (WCSIVYYELN…SPHNPISSVS (195 aa)). Phosphoserine occurs at positions 463 and 465.

The protein belongs to the dwarfin/SMAD family. Found in a complex with SMAD4 and YY1. Interacts with HGS, NANOG and ZCCHC12. Upon C-terminus phosphorylation: forms trimers with another SMAD1 and the co-SMAD SMAD4. Interacts with PEBP2-alpha subunit, CREB-binding protein (CBP), p300, SMURF1, SMURF2, USP15 and HOXC8. Associates with ZNF423 or ZNF521 in response to BMP2 leading to activate transcription of BMP target genes. Interacts with SKOR1. Interacts (via MH2 domain) with LEMD3. Binding to LEMD3 results in at least a partial reduction of receptor-mediated phosphorylation. Forms a ternary complex with PSMB4 and OAZ1 before PSMB4 is incorporated into the 20S proteasome. Found in a macromolecular complex with FAM83G. Interacts (via MH2 domain) with FAM83G (via MH2 domain); in a SMAD4-independent manner. Interacts with ZC3H3. Interacts with TMEM119. Interacts (via MH1 and MH2 domains) with ZNF8. Interacts with RANBP3L; the interaction increases when SMAD1 is not phosphorylated and mediates SMAD1 nuclear export. Interacts with EGR1; this interaction inhibits SMAD1 dephosphorylation. Interacts with SMAD6. Interacts with YAP1. In terms of processing, phosphorylation of the C-terminal SVS motif by BMP type 1 receptor kinase activates SMAD1 by promoting dissociation from the receptor and trimerization with SMAD4. Phosphorylation by ERK2 MAP kinase in response to EGF or HGF prevents SMAD1 nuclear accumulation and transcriptional activity in response to BMP. Dephosphorylation, probably by PPM1A, induces its export from the nucleus to the cytoplasm. Dephosphorylation is inhibited by association with EGR1. Phosphorylation by CDK8/9 creates binding sites for YAP1, and subsequent phosphorylation by GSK3 switches off YAP1 binding and adds binding sites for SMURF1. Post-translationally, ubiquitinated by SMAD-specific E3 ubiquitin ligase SMURF1, leading to its degradation. Monoubiquitinated, leading to prevent DNA-binding. Deubiquitination by USP15 alleviates inhibition and promotes activation of TGF-beta target genes. Dephosphorylation, probably by PPM1A, induces its export from the nucleus to the cytoplasm. Phospho-SMAD1 is ubiquitinated by CHIP leading to disruption of the SMAD1-SMAD4 complex.

The protein localises to the cytoplasm. It localises to the nucleus. Functionally, transcriptional modulator that plays a role in various cellular processes, including embryonic development, cell differentiation, and tissue homeostasis. Upon BMP ligand binding to their receptors at the cell surface, is phosphorylated by activated type I BMP receptors (BMPRIs) and associates with SMAD4 to form an heteromeric complex which translocates into the nucleus acting as transcription factor. In turn, the hetero-trimeric complex recognizes cis-regulatory elements containing Smad Binding Elements (SBEs) to modulate the outcome of the signaling network. SMAD1/OAZ1/PSMB4 complex mediates the degradation of the CREBBP/EP300 repressor SNIP1. In Coturnix japonica (Japanese quail), this protein is Mothers against decapentaplegic homolog 1 (SMAD1).